Here is a 76-residue protein sequence, read N- to C-terminus: Acyl carrier protein (76 aa).

The Carrier domain occupies 1–76 (MATFDKVKDI…DVVNYIEQNQ (76 aa)). O-(pantetheine 4'-phosphoryl)serine is present on serine 36.

It belongs to the acyl carrier protein (ACP) family. In terms of processing, 4'-phosphopantetheine is transferred from CoA to a specific serine of apo-ACP by AcpS. This modification is essential for activity because fatty acids are bound in thioester linkage to the sulfhydryl of the prosthetic group.

The protein resides in the cytoplasm. Its pathway is lipid metabolism; fatty acid biosynthesis. Its function is as follows. Carrier of the growing fatty acid chain in fatty acid biosynthesis. This chain is Acyl carrier protein, found in Natranaerobius thermophilus (strain ATCC BAA-1301 / DSM 18059 / JW/NM-WN-LF).